The chain runs to 146 residues: Large ribosomal subunit protein uL13 (146 aa).

The protein belongs to the universal ribosomal protein uL13 family. In terms of assembly, part of the 50S ribosomal subunit.

In terms of biological role, this protein is one of the early assembly proteins of the 50S ribosomal subunit, although it is not seen to bind rRNA by itself. It is important during the early stages of 50S assembly. The chain is Large ribosomal subunit protein uL13 from Methylobacillus flagellatus (strain ATCC 51484 / DSM 6875 / VKM B-1610 / KT).